Reading from the N-terminus, the 243-residue chain is Type III pantothenate kinase (243 aa).

Residue 7-14 (DLGNSRFK) coordinates ATP. Substrate-binding positions include Tyr-91 and 98–101 (GVDR). Asp-100 serves as the catalytic Proton acceptor. Thr-122 provides a ligand contact to ATP. Thr-172 serves as a coordination point for substrate.

Belongs to the type III pantothenate kinase family. As to quaternary structure, homodimer. It depends on NH4(+) as a cofactor. K(+) is required as a cofactor.

The protein localises to the cytoplasm. It carries out the reaction (R)-pantothenate + ATP = (R)-4'-phosphopantothenate + ADP + H(+). Its pathway is cofactor biosynthesis; coenzyme A biosynthesis; CoA from (R)-pantothenate: step 1/5. In terms of biological role, catalyzes the phosphorylation of pantothenate (Pan), the first step in CoA biosynthesis. In Stenotrophomonas maltophilia (strain R551-3), this protein is Type III pantothenate kinase.